We begin with the raw amino-acid sequence, 509 residues long: tRNA-2-methylthio-N(6)-dimethylallyladenosine synthase (509 aa).

Polar residues predominate over residues 1 to 13; that stretch reads MNEQQRLASQQAN. Residues 1–26 form a disordered region; it reads MNEQQRLASQQANSSKKKEEKDYSKY. Basic and acidic residues predominate over residues 16 to 25; it reads KKKEEKDYSK. Positions 66–184 constitute an MTTase N-terminal domain; the sequence is RKFYIRTYGC…LPYILKDAMF (119 aa). The [4Fe-4S] cluster site is built by Cys-75, Cys-111, Cys-145, Cys-221, Cys-225, and Cys-228. The Radical SAM core domain occupies 207-437; the sequence is RRGDIKAWVN…NALVNKLAIE (231 aa). One can recognise a TRAM domain in the interval 440 to 503; it reads NRYKGQIVEV…TWSLNGELVE (64 aa).

This sequence belongs to the methylthiotransferase family. MiaB subfamily. Monomer. It depends on [4Fe-4S] cluster as a cofactor.

Its subcellular location is the cytoplasm. The catalysed reaction is N(6)-dimethylallyladenosine(37) in tRNA + (sulfur carrier)-SH + AH2 + 2 S-adenosyl-L-methionine = 2-methylsulfanyl-N(6)-dimethylallyladenosine(37) in tRNA + (sulfur carrier)-H + 5'-deoxyadenosine + L-methionine + A + S-adenosyl-L-homocysteine + 2 H(+). Its function is as follows. Catalyzes the methylthiolation of N6-(dimethylallyl)adenosine (i(6)A), leading to the formation of 2-methylthio-N6-(dimethylallyl)adenosine (ms(2)i(6)A) at position 37 in tRNAs that read codons beginning with uridine. The protein is tRNA-2-methylthio-N(6)-dimethylallyladenosine synthase of Bacillus cereus (strain ATCC 10987 / NRS 248).